The chain runs to 132 residues: Riboflavin kinase (132 aa).

CDP is bound at residue 10–15 (GLGEGR). Mg(2+)-binding residues include T39 and N41. Residues T95, Y96, and E103 each contribute to the FMN site. 108 to 111 (MKLR) contributes to the CDP binding site.

Monomer. The cofactor is Mg(2+).

It carries out the reaction riboflavin + CTP = CDP + FMN + H(+). Its pathway is cofactor biosynthesis; FMN biosynthesis; FMN from riboflavin (CTP route): step 1/1. Catalyzes the CTP-dependent phosphorylation of riboflavin (vitamin B2) to form flavin mononucleotide (FMN). Can also utilize UTP as the phosphate donor, although less efficiently, and it is unclear if ATP and GTP can also serve as substrates or not. This Methanocaldococcus jannaschii (strain ATCC 43067 / DSM 2661 / JAL-1 / JCM 10045 / NBRC 100440) (Methanococcus jannaschii) protein is Riboflavin kinase (ribK).